The chain runs to 315 residues: Cobalamin biosynthesis protein CobD (315 aa).

The next 7 membrane-spanning stretches (helical) occupy residues 1-21 (MLDI…YWFP), 50-70 (VFGG…PFII), 79-99 (VIYH…KSLH), 151-171 (DGII…AMMY), 209-229 (VTGI…FYSI), 250-270 (AAAA…GEVV), and 291-311 (IILM…IICF).

It belongs to the CobD/CbiB family.

The protein resides in the cell membrane. Its pathway is cofactor biosynthesis; adenosylcobalamin biosynthesis. Its function is as follows. Converts cobyric acid to cobinamide by the addition of aminopropanol on the F carboxylic group. This Clostridium acetobutylicum (strain ATCC 824 / DSM 792 / JCM 1419 / IAM 19013 / LMG 5710 / NBRC 13948 / NRRL B-527 / VKM B-1787 / 2291 / W) protein is Cobalamin biosynthesis protein CobD.